We begin with the raw amino-acid sequence, 273 residues long: Tryptase (273 aa).

The signal sequence occupies residues 1–18 (MLKLLLLTLPLLSSLVHA). Residues 19–28 (APSLAMPREG) constitute a propeptide, activation peptide. The region spanning 29 to 270 (IVGGQEASGN…YLDWIYRYVP (242 aa)) is the Peptidase S1 domain. N-linked (GlcNAc...) asparagine glycosylation is present at N49. Residues C57 and C73 are joined by a disulfide bond. Residues H72 and D119 each act as charge relay system in the active site. 3 cysteine pairs are disulfide-bonded: C153/C228, C186/C209, and C218/C246. The active-site Charge relay system is S222.

It belongs to the peptidase S1 family. Tryptase subfamily. Homotetramer. Post-translationally, glycosylated. Mast cells.

It localises to the secreted. It carries out the reaction Preferential cleavage: Arg-|-Xaa, Lys-|-Xaa, but with more restricted specificity than trypsin.. Tryptase is the major neutral protease present in mast cells and is secreted upon the coupled activation-degranulation response of this cell type. May play a role in innate immunity. This Rattus norvegicus (Rat) protein is Tryptase (Tpsab1).